We begin with the raw amino-acid sequence, 828 residues long: DNA gyrase subunit A (828 aa).

Positions 32-497 (LPDVRDGLKP…EVLSLEDEDL (466 aa)) constitute a Topo IIA-type catalytic domain. Tyr-120 acts as the O-(5'-phospho-DNA)-tyrosine intermediate in catalysis. Positions 524–530 (QKRGGRG) match the GyrA-box motif.

Belongs to the type II topoisomerase GyrA/ParC subunit family. In terms of assembly, heterotetramer, composed of two GyrA and two GyrB chains. In the heterotetramer, GyrA contains the active site tyrosine that forms a transient covalent intermediate with DNA, while GyrB binds cofactors and catalyzes ATP hydrolysis.

The protein resides in the cytoplasm. The enzyme catalyses ATP-dependent breakage, passage and rejoining of double-stranded DNA.. Functionally, a type II topoisomerase that negatively supercoils closed circular double-stranded (ds) DNA in an ATP-dependent manner to modulate DNA topology and maintain chromosomes in an underwound state. Negative supercoiling favors strand separation, and DNA replication, transcription, recombination and repair, all of which involve strand separation. Also able to catalyze the interconversion of other topological isomers of dsDNA rings, including catenanes and knotted rings. Type II topoisomerases break and join 2 DNA strands simultaneously in an ATP-dependent manner. The chain is DNA gyrase subunit A from Streptococcus pyogenes serotype M18 (strain MGAS8232).